We begin with the raw amino-acid sequence, 131 residues long: Large ribosomal subunit protein bL17 (131 aa).

This sequence belongs to the bacterial ribosomal protein bL17 family. As to quaternary structure, part of the 50S ribosomal subunit. Contacts protein L32.

This Bordetella parapertussis (strain 12822 / ATCC BAA-587 / NCTC 13253) protein is Large ribosomal subunit protein bL17.